The sequence spans 429 residues: Glutamate-1-semialdehyde 2,1-aminomutase 2 (429 aa).

N6-(pyridoxal phosphate)lysine is present on K268.

Belongs to the class-III pyridoxal-phosphate-dependent aminotransferase family. HemL subfamily. As to quaternary structure, homodimer. The cofactor is pyridoxal 5'-phosphate.

It localises to the cytoplasm. The catalysed reaction is (S)-4-amino-5-oxopentanoate = 5-aminolevulinate. It participates in porphyrin-containing compound metabolism; protoporphyrin-IX biosynthesis; 5-aminolevulinate from L-glutamyl-tRNA(Glu): step 2/2. The chain is Glutamate-1-semialdehyde 2,1-aminomutase 2 from Bacillus cereus (strain AH187).